A 403-amino-acid polypeptide reads, in one-letter code: Phosphopentomutase (403 aa).

Mn(2+)-binding residues include Asp-13, Asp-298, His-303, Asp-339, His-340, and His-351.

It belongs to the phosphopentomutase family. The cofactor is Mn(2+).

The protein resides in the cytoplasm. The enzyme catalyses 2-deoxy-alpha-D-ribose 1-phosphate = 2-deoxy-D-ribose 5-phosphate. The catalysed reaction is alpha-D-ribose 1-phosphate = D-ribose 5-phosphate. It functions in the pathway carbohydrate degradation; 2-deoxy-D-ribose 1-phosphate degradation; D-glyceraldehyde 3-phosphate and acetaldehyde from 2-deoxy-alpha-D-ribose 1-phosphate: step 1/2. Functionally, isomerase that catalyzes the conversion of deoxy-ribose 1-phosphate (dRib-1-P) and ribose 1-phosphate (Rib-1-P) to deoxy-ribose 5-phosphate (dRib-5-P) and ribose 5-phosphate (Rib-5-P), respectively. This chain is Phosphopentomutase, found in Streptococcus pyogenes serotype M2 (strain MGAS10270).